The sequence spans 90 residues: SAGA-associated factor 11 (90 aa).

The segment at 63–84 adopts an SGF11-type zinc-finger fold; it reads FSCDNCGRKIAGGRFAQHINKC.

This sequence belongs to the SGF11 family. In terms of assembly, component of the 1.8 MDa SAGA transcription coactivator-HAT complex. SAGA is built of 5 distinct domains with specialized functions. Within the SAGA complex, SUS1, SGF11, SGF73 and UBP8 form an additional subcomplex of SAGA called the DUB module (deubiquitination module). Interacts directly with SGF73, SUS1 and UBP8.

It is found in the nucleus. Functionally, functions as a component of the transcription regulatory histone acetylation (HAT) complex SAGA. At the promoters, SAGA is required for recruitment of the basal transcription machinery. It influences RNA polymerase II transcriptional activity through different activities such as TBP interaction and promoter selectivity, interaction with transcription activators, and chromatin modification through histone acetylation and deubiquitination. SAGA acetylates nucleosomal histone H3 to some extent (to form H3K9ac, H3K14ac, H3K18ac and H3K23ac). SAGA interacts with DNA via upstream activating sequences (UASs). Involved in transcriptional regulation of a subset of SAGA-regulated genes. Within the SAGA complex, participates in a subcomplex, that specifically deubiquitinates histones H2B. The sequence is that of SAGA-associated factor 11 from Lodderomyces elongisporus (strain ATCC 11503 / CBS 2605 / JCM 1781 / NBRC 1676 / NRRL YB-4239) (Yeast).